The chain runs to 674 residues: Protein tesmin/TSO1-like CXC 2 (674 aa).

Polar residues-rich tracts occupy residues 1–16 (MDTPQKSITQIGTPIS) and 76–89 (THNSSSSDPTNSVE). Disordered regions lie at residues 1–20 (MDTPQKSITQIGTPISKSRF) and 69–113 (KESR…GLNI). The segment covering 95–109 (STSHEEVPAEGEDTK) has biased composition (basic and acidic residues). Positions 373-498 (SCKRCNCKKS…RCEGCKNAFG (126 aa)) constitute a CRC domain. Disordered stretches follow at residues 504–529 (SIDMEAEQEEENETSEKSRTAKSQQN) and 623–655 (IPNIKSVSPNGKRVSPPHMESSSSGSILGRRNG). A compositionally biased stretch (acidic residues) spans 507–516 (MEAEQEEENE).

Belongs to the lin-54 family. In terms of tissue distribution, ubiquitous but expressed mostly in all the aerial organs with highest expression in flowers.

Its subcellular location is the nucleus. Its function is as follows. Plays a role in development of both male and female reproductive tissues. The chain is Protein tesmin/TSO1-like CXC 2 (TCX2) from Arabidopsis thaliana (Mouse-ear cress).